We begin with the raw amino-acid sequence, 154 residues long: Yop proteins translocation protein O (154 aa).

The interval 132–154 (ELNQQHYQEEQEQEEFLQHHRNA) is disordered.

It belongs to the SpaM family.

Functionally, component of the yop secretion machinery. This Yersinia pseudotuberculosis serotype I (strain IP32953) protein is Yop proteins translocation protein O (yscO).